A 31-amino-acid chain; its full sequence is Nemertide alpha-5 (31 aa).

3 cysteine pairs are disulfide-bonded: C2/C16, C9/C20, and C15/C26. 4-hydroxyproline occurs at positions 28 and 29.

The protein belongs to the nemertide family. In terms of tissue distribution, confined to the epidermis and to the mucus layer.

Its subcellular location is the secreted. Its function is as follows. Highly potent toxin against both insect and some mammalian sodium channels (Nav). It potently inhibits inactivation of insect sodium channels of B.germanica (BgNav1) (EC(50)=7.8 nM) and also delays the inactivation of mammalian Nav with potent activity on Nav1.3/SCN3A and Nav1.4/SCN4A (hNav1.1/SCN1A; EC(50)=102.1 nM, rNav1.2/SCN2A; EC(50)=156.1 nM, rNav1.3/SCN3A; EC(50)=9.4 nM, rNav1.4/SCN4A; EC(50)=15.4 nM, hNav1.5/SCN5A; EC(50)=132.7 nM, mNav1.6/SCN8A; EC(50)=66.9 nM, hNav1.9/SCN9A; EC(50)=73 nM). 1 uM is enough to completely inhibits the inactivation, resulting in sustained non-inactivating currents. In addition, the toxin significantly enhances the recovery from inactivation, and the open state is not required for the toxin to interact with the channel. In vivo, injection into brine shrimp (Artemia salina) stops movement or causes death after 24 hours (EC(50)=0.4 uM). The polypeptide is Nemertide alpha-5 (Ramphogordius pseudolacteus (Ribbon worm)).